The sequence spans 518 residues: Serine--tRNA ligase, mitochondrial (518 aa).

A mitochondrion-targeting transit peptide spans Met-1 to Phe-34. Residue Lys-110 is modified to N6-acetyllysine. An N6-succinyllysine modification is found at Lys-195. Thr-299–Glu-301 serves as a coordination point for L-serine. An ATP-binding site is contributed by Arg-330–Glu-332. N6-succinyllysine is present on Lys-337. Val-345 provides a ligand contact to ATP. Glu-352 provides a ligand contact to L-serine. Position 418-421 (Glu-418–Ser-421) interacts with ATP. Position 453 (Thr-453) interacts with L-serine. A disordered region spans residues Pro-497–Arg-518.

Belongs to the class-II aminoacyl-tRNA synthetase family. Type-1 seryl-tRNA synthetase subfamily. Homodimer. The tRNA molecule probably binds across the dimer. In terms of tissue distribution, ubiquitous.

It is found in the mitochondrion matrix. It catalyses the reaction tRNA(Ser) + L-serine + ATP = L-seryl-tRNA(Ser) + AMP + diphosphate + H(+). It carries out the reaction tRNA(Sec) + L-serine + ATP = L-seryl-tRNA(Sec) + AMP + diphosphate + H(+). It functions in the pathway aminoacyl-tRNA biosynthesis; selenocysteinyl-tRNA(Sec) biosynthesis; L-seryl-tRNA(Sec) from L-serine and tRNA(Sec): step 1/1. Functionally, catalyzes the attachment of serine to tRNA(Ser). Is also probably able to aminoacylate tRNA(Sec) with serine, to form the misacylated tRNA L-seryl-tRNA(Sec), which will be further converted into selenocysteinyl-tRNA(Sec). The polypeptide is Serine--tRNA ligase, mitochondrial (Sars2) (Mus musculus (Mouse)).